Here is a 313-residue protein sequence, read N- to C-terminus: uncharacterized protein (313 aa).

The 56-residue stretch at 2–57 (KLERLLAMVVLLISKKQVQAAELAELFEVSVRTIYRDIETINRAGIPIVTSQGSGG) folds into the HTH deoR-type domain. Residues 19–38 (VQAAELAELFEVSVRTIYRD) constitute a DNA-binding region (H-T-H motif). The 80-residue stretch at 131-210 (HTEDQKTLRE…KDLAILHQTF (80 aa)) folds into the WYL domain.

The protein localises to the cytoplasm. This is an uncharacterized protein from Bacillus subtilis (strain 168).